The sequence spans 492 residues: Serine incorporator 4 (492 aa).

10 consecutive transmembrane segments (helical) span residues 59-79 (YILL…KTVV), 113-133 (AVYR…VLLV), 148-168 (SFWS…FCIP), 179-199 (IGIC…TAFA), 219-239 (GVSL…VLLF), 254-274 (LLSL…APCI), 281-301 (SGLL…FSAL), 330-350 (IPDT…VLFA), 421-441 (GFHF…TNWF), and 464-484 (VASC…PLLA).

This sequence belongs to the TDE1 family.

It localises to the membrane. Its function is as follows. Incorporates a polar amino acid serine into membranes and facilitates the synthesis of two serine-derived lipids, phosphatidylserine and sphingolipids. This Mus musculus (Mouse) protein is Serine incorporator 4 (Serinc4).